Here is a 635-residue protein sequence, read N- to C-terminus: ADP-ribosylation factor-binding protein GGA1 (635 aa).

Position 1 is an N-acetylmethionine (Met-1). The region spanning 17–147 is the VHS domain; the sequence is ATNPLNKELN…MLKKQGIVKS (131 aa). The segment at 114–273 is interaction with ARF3; that stretch reads KILELLYSWT…RLASDTEDND (160 aa). The GAT domain maps to 171–298; sequence DEEKSKMLAR…VINLYKQLVR (128 aa). At Ser-185 the chain carries Phosphoserine. Residues 299–505 are unstructured hinge; sequence GEEVNGDATA…ITVPLESIKP (207 aa). Residues 305-349 are disordered; the sequence is DATASSIPGSTSALLDLSGLDLPPPGTTQPATPTRPGNQSSPEQL. Positions 313 to 325 are enriched in low complexity; that stretch reads GSTSALLDLSGLD. Phosphoserine is present on Ser-354. The Autoinhibitory signature appears at 357 to 361; it reads DDELM. Disordered stretches follow at residues 362–422 and 455–490; these read SLGL…LDDL and RDLQSKSSSPSPGAASLLHTTSPEPPGPPPQATPTE. Over residues 383 to 393 the composition is skewed to polar residues; sequence NFQSSDGTESS. Ser-417 bears the Phosphoserine mark. Over residues 459 to 476 the composition is skewed to low complexity; the sequence is SKSSSPSPGAASLLHTTS. Residues 477–486 show a composition bias toward pro residues; sequence PEPPGPPPQA. Positions 506 to 627 constitute a GAE domain; sequence SSILPVTVYD…NEMGDVDQFP (122 aa).

This sequence belongs to the GGA protein family. Monomer. Interacts with GGA2 and GGA3. Binds to clathrin and activated ARFs, including ARF1, ARF5 and ARF6. Interacts with RABEP1 and RABGEF1. Interacts with the type-I membrane proteins LRP3, M6PR/CD-MPR and IGF2R/CI-MPR. Interacts (via N-terminal VHS domain) with SORL1/sorLA and SORT1 (via C-terminal cytosolic domain). Interacts with EPN4. Interacts with CCDC91. Interacts with HEATR5B/p200a. Interacts with SYNRG/gamma-synergin. Interacts (via GAE doamin) with NECAP1 and NECAP2. Interacts (via GAE domain) with AFTPH/aftiphilin. Interacts with TSG101 and UBC. Interacts with RNF11. Interacts (via VHS domain) with BACE1 (via DXXLL motif); the interaction highly increases when BACE1 is phosphorylated at 'Ser-498'. Interacts with CNST. Interacts with ADRA2B. Interacts with ARL3; the interaction recruits, in collaboration with RABEP1, PKD1:PKD2 complex to trans-Golgi network and is required for ciliary targeting. Phosphorylated by CK2 and dephosphorylated by PP2A. Phosphorylation of GGA1 allows the internal DXXLL motif to bind the VHS domain and to inhibit the recognition of cargo signals. Post-translationally, ubiquitinated.

The protein localises to the golgi apparatus. It is found in the trans-Golgi network membrane. Its subcellular location is the endosome membrane. It localises to the early endosome membrane. Functionally, plays a role in protein sorting and trafficking between the trans-Golgi network (TGN) and endosomes. Mediates the ARF-dependent recruitment of clathrin to the TGN and binds ubiquitinated proteins and membrane cargo molecules with a cytosolic acidic cluster-dileucine (DXXLL) motif. Mediates export of the GPCR receptor ADRA2B to the cell surface. Required for targeting PKD1:PKD2 complex from the trans-Golgi network to the cilium membrane. Regulates retrograde transport of proteins such as phosphorylated form of BACE1 from endosomes to the trans-Golgi network. The sequence is that of ADP-ribosylation factor-binding protein GGA1 (Gga1) from Mus musculus (Mouse).